We begin with the raw amino-acid sequence, 68 residues long: Alpha-conotoxin Lp1.1 (68 aa).

Residues Met-1–Thr-21 form the signal peptide. The propeptide occupies Phe-22 to Arg-48. Disulfide bonds link Cys-50-Cys-56 and Cys-51-Cys-64. The interval Ala-52–Ala-54 is lacks the Ser-Xaa-Pro motif that is crucial for potent interaction with nAChR. A Glycine amide modification is found at Gly-65. The propeptide occupies Gly-66–Arg-68.

It belongs to the conotoxin A superfamily. Expressed by the venom duct.

Its subcellular location is the secreted. Functionally, alpha-conotoxins act on postsynaptic membranes, they bind to the nicotinic acetylcholine receptors (nAChR) and thus inhibit them. Synthetic peptide inhibits alpha-6/alpha-3/beta-2 and alpha-3/beta-2 nicotinic acetylcholine receptors and causes uncoordinated movement when intramuscularly injected into goldfish. Has a distinct nAChR binding mode from other alpha-conotoxins, due to a different three residue motif (Ala-Xaa-Ala instead of the conserved Ser-Xaa-Pro motif). This chain is Alpha-conotoxin Lp1.1, found in Conus leopardus (Leopard cone).